The following is an 85-amino-acid chain: MCLVAPMQCGCASCVRILDALLSAMEALVQMRLLSEEEKTSCASQFLELAIFAVENCRGGRQALLQARGEPASLGEVAGKGPAAD.

Interacts with host IKBKG; this interaction prevents NF-kappa-B activation.

It is found in the host cytoplasm. Its function is as follows. Plays a role in the inhibition of the host NF-kappa-B pathway by preventing ubiquitin binding-dependent regulation of host IKBKB activation by IKBKG/NEMO. This is Protein MC005 (MC005L) from Molluscum contagiosum virus subtype 1 (MOCV).